The chain runs to 236 residues: Small ribosomal subunit protein uS2c (236 aa).

This sequence belongs to the universal ribosomal protein uS2 family.

Its subcellular location is the plastid. It localises to the chloroplast. The chain is Small ribosomal subunit protein uS2c (rps2) from Ceratophyllum demersum (Rigid hornwort).